The following is an 814-amino-acid chain: Protein ADP-ribosyltransferase PARP3 (814 aa).

Basic and acidic residues-rich tracts occupy residues 1 to 19 (MKVH…EQKG) and 27 to 48 (EGKL…DDGR). The segment at 1–52 (MKVHETRSHAHMSGDEQKGNLRKHKAEGKLPESEQSQKKAKPENDDGRSVNG) is disordered. Residues 38-186 (KKAKPENDDG…KRELGSADKP (149 aa)) enclose the PADR1 zinc-binding domain. The segment at 105–150 (GALAKCPLCGGTLICDNEKRFVCGGEISEWCSCVFSTKDPPRKEEP) is zinc ribbon. The Zn(2+) site is built by cysteine 110, cysteine 113, cysteine 127, and cysteine 137. 2 TPR repeats span residues 182–215 (SADK…NGGK) and 277–310 (DLSV…YGKR). In terms of domain architecture, BRCT spans 187–274 (FVGMMISLMG…EAQPLEAYDV (88 aa)). Residues 322–422 (GGKIFEKDGL…KKIQKKPHKF (101 aa)) form the WGR domain. The PARP alpha-helical domain maps to 449 to 568 (HCKLDSFVAN…DINTASRLIG (120 aa)). One can recognise a PARP catalytic domain in the interval 577 to 808 (DPLSDRYKKL…VKYEEKGTEI (232 aa)).

It belongs to the ARTD/PARP family.

Its subcellular location is the nucleus. The catalysed reaction is L-aspartyl-[protein] + NAD(+) = 4-O-(ADP-D-ribosyl)-L-aspartyl-[protein] + nicotinamide. It catalyses the reaction L-glutamyl-[protein] + NAD(+) = 5-O-(ADP-D-ribosyl)-L-glutamyl-[protein] + nicotinamide. Its function is as follows. Involved in the base excision repair (BER) pathway, by catalyzing the poly(ADP-ribosyl)ation of a limited number of acceptor proteins involved in chromatin architecture and in DNA metabolism. This modification follows DNA damages and appears as an obligatory step in a detection/signaling pathway leading to the reparation of DNA strand breaks. The polypeptide is Protein ADP-ribosyltransferase PARP3 (PARP3) (Arabidopsis thaliana (Mouse-ear cress)).